A 171-amino-acid polypeptide reads, in one-letter code: Protein MGF 110-12L (171 aa).

A run of 3 helical transmembrane segments spans residues 2–20 (KVFL…LTYQ), 123–143 (HYCF…FAIC), and 150–170 (TTMK…PILN).

The protein belongs to the asfivirus MGF 110 family.

Its subcellular location is the host membrane. In terms of biological role, plays a role in virus cell tropism, and may be required for efficient virus replication in macrophages. The chain is Protein MGF 110-12L from African swine fever virus (isolate Tick/Malawi/Lil 20-1/1983) (ASFV).